We begin with the raw amino-acid sequence, 895 residues long: Stonin-2 (895 aa).

Disordered regions lie at residues 15–119, 145–222, and 234–280; these read WVSF…PPHK, SESS…APPV, and EDNE…KSTL. Basic and acidic residues predominate over residues 64-73; the sequence is SHSEQDDSSE. Residues 145–193 show a composition bias toward polar residues; sequence SESSWTTHSEDTSSPSVAPSYTDLQLINTEEQASGRASGTDSTDNSSSL. Residues 241–251 are compositionally biased toward pro residues; the sequence is PSPPVPSPKKP. Residue Thr-253 is modified to Phosphothreonine. A phosphoserine mark is found at Ser-278 and Ser-299. 2 short sequence motifs (NPF) span residues 310–312 and 326–328; these read NPF. The segment at 386-421 is disordered; it reads QIDDPDPVGNTALPDDDPTASVELDAPSPASALSQP. The SHD domain occupies 424–557; the sequence is GWPMMLRIPE…DLPVLSMDLS (134 aa). The region spanning 565-872 is the MHD domain; it reads EEEITVDVRD…AHYSYKVEIE (308 aa). Ser-759 carries the phosphoserine modification.

Belongs to the Stoned B family. As to quaternary structure, interacts with the second C2 domain of synaptotagmins SYT1 and SYT2. Interacts with EPS15, EPS15R and ITSN1. Interacts indirectly with the AP-2 adapter complex. Interacts with TOR1A and COPS4; the interaction controls STON2 protein stability. Post-translationally, phosphorylated in vitro by PKD. In terms of processing, neddylated; deneddylated via its interaction with the COP9 signalosome (CSN) complex through TOR1A and COPS4. Ubiquitinated; leading to its degradation.

Its subcellular location is the cytoplasm. It localises to the membrane. The protein resides in the synapse. It is found in the synaptosome. Functionally, adapter protein involved in endocytic machinery. Involved in the synaptic vesicle recycling. May facilitate clathrin-coated vesicle uncoating. This chain is Stonin-2 (Ston2), found in Mus musculus (Mouse).